Here is a 584-residue protein sequence, read N- to C-terminus: Proline--tRNA ligase (584 aa).

This sequence belongs to the class-II aminoacyl-tRNA synthetase family. ProS type 1 subfamily. In terms of assembly, homodimer.

It localises to the cytoplasm. The enzyme catalyses tRNA(Pro) + L-proline + ATP = L-prolyl-tRNA(Pro) + AMP + diphosphate. Functionally, catalyzes the attachment of proline to tRNA(Pro) in a two-step reaction: proline is first activated by ATP to form Pro-AMP and then transferred to the acceptor end of tRNA(Pro). As ProRS can inadvertently accommodate and process non-cognate amino acids such as alanine and cysteine, to avoid such errors it has two additional distinct editing activities against alanine. One activity is designated as 'pretransfer' editing and involves the tRNA(Pro)-independent hydrolysis of activated Ala-AMP. The other activity is designated 'posttransfer' editing and involves deacylation of mischarged Ala-tRNA(Pro). The misacylated Cys-tRNA(Pro) is not edited by ProRS. The sequence is that of Proline--tRNA ligase from Mycobacterium sp. (strain KMS).